The primary structure comprises 201 residues: Potassium-transporting ATPase KdpC subunit (201 aa).

A helical membrane pass occupies residues 7–29 (PALVLLTALTAITGLAYPLAMTG).

This sequence belongs to the KdpC family. In terms of assembly, the system is composed of three essential subunits: KdpA, KdpB and KdpC.

Its subcellular location is the cell inner membrane. Its function is as follows. Part of the high-affinity ATP-driven potassium transport (or Kdp) system, which catalyzes the hydrolysis of ATP coupled with the electrogenic transport of potassium into the cytoplasm. This subunit acts as a catalytic chaperone that increases the ATP-binding affinity of the ATP-hydrolyzing subunit KdpB by the formation of a transient KdpB/KdpC/ATP ternary complex. This is Potassium-transporting ATPase KdpC subunit from Methylorubrum populi (strain ATCC BAA-705 / NCIMB 13946 / BJ001) (Methylobacterium populi).